Consider the following 421-residue polypeptide: Testin (421 aa).

One can recognise a PET domain in the interval 92–199 (MILTNPVAAK…GDVKLPREMN (108 aa)). Residues 133–164 (EKQPVAGSEGAQYRKKQLAKQLPAHDQDPSKC) are disordered. The segment covering 155–164 (PAHDQDPSKC) has biased composition (basic and acidic residues). LIM zinc-binding domains lie at 234–297 (YSCY…CDSE), 299–359 (PRCA…NHAV), and 362–421 (QGCH…KMMS).

Belongs to the prickle / espinas / testin family. Interacts via LIM domain 1 with ZYX. Interacts (via LIM domain 3) with ENAH and VASP. Interacts with ALKBH4, talin, actin, alpha-actinin, GRIP1 and PXN. Interacts (via LIM domain 2) with ACTL7A (via N-terminus). Heterodimer with ACTL7A; the heterodimer interacts with ENAH to form a heterotrimer.

Its subcellular location is the cytoplasm. The protein resides in the cell junction. It is found in the focal adhesion. Scaffold protein that may play a role in cell adhesion, cell spreading and in the reorganization of the actin cytoskeleton. Plays a role in the regulation of cell proliferation. May act as a tumor suppressor. The chain is Testin (TES) from Sus scrofa (Pig).